Reading from the N-terminus, the 1059-residue chain is Disks large-associated protein 2 (1059 aa).

Disordered stretches follow at residues 31–54 (GEPE…PAEE) and 245–311 (KSHS…SDST). A compositionally biased stretch (polar residues) spans 245 to 261 (KSHSLEGSSKSNINGTK). Residues 262 to 271 (SDSRVDDHHQ) show a composition bias toward basic and acidic residues. Basic residues predominate over residues 272 to 285 (SHLSKHSKRSKSKE). Residues Ser-302, Ser-308, Ser-390, and Ser-456 each carry the phosphoserine modification. The interval 613-669 (YKKTPPPVPPRTTSKPLISVTAQSSTESTQDAYQDSRAQRMSPWPQDSRGGLYNSMD) is disordered. Residues 632-645 (VTAQSSTESTQDAY) are compositionally biased toward polar residues. A phosphoserine mark is found at Ser-667, Ser-670, Ser-673, and Ser-720. Residues 723-756 (VQDSEFPDHQPYPRSDVETATDSDTESRGLREYH) form a disordered region. Thr-743 bears the Phosphothreonine mark. At Ser-745 the chain carries Phosphoserine. Residues 747–756 (TESRGLREYH) show a composition bias toward basic and acidic residues. 4 positions are modified to phosphoserine: Ser-776, Ser-811, Ser-983, and Ser-1012. A disordered region spans residues 985–1025 (ERKEERKIPPPIPKKPPKGKFPITREKSLDLPDRQRQEARR). Residues 1007 to 1025 (ITREKSLDLPDRQRQEARR) are compositionally biased toward basic and acidic residues.

Belongs to the SAPAP family. Interacts with DLG4/PSD-95. In terms of tissue distribution, expressed in various brain areas.

It localises to the cell membrane. It is found in the postsynaptic density. The protein localises to the synapse. May play a role in the molecular organization of synapses and neuronal cell signaling. Could be an adapter protein linking ion channel to the subsynaptic cytoskeleton. May induce enrichment of PSD-95/SAP90 at the plasma membrane. In Mus musculus (Mouse), this protein is Disks large-associated protein 2.